Consider the following 539-residue polypeptide: Chaperone Ric-8A (539 aa).

Belongs to the synembryn family.

It is found in the cytoplasm. It localises to the cell cortex. Functionally, chaperone that specifically binds and folds nascent G alpha proteins prior to G protein heterotrimer formation, promoting their stability and activity: folds GNAI1, GNAO1, GNA13 and GNAQ. Does not fold G(s) G-alpha proteins GNAS nor GNAL. Also acts as a guanine nucleotide exchange factor (GEF) for G alpha proteins by stimulating exchange of bound GDP for free GTP. This chain is Chaperone Ric-8A (ric8a), found in Xenopus tropicalis (Western clawed frog).